The sequence spans 505 residues: MEDDDFSIKDKKENYETCSTETISSYISINEKCQLIEKDINDDNHENPYMIFNKISSSLIAMLQGVEVLCNLSIIYLLKDNYHLHPASLSIVMCFIKIPWSIKLVWAVISDNYPIFGYRRKYYLLLGSFLCILSLICLGLITHNNLFITILLLFIYFFGSSLCNVIGEAQVVESNRNCSINSSARNVSLFFAFRKLSFAIMSYLSGYLLLLISKKHIFLIGSFLPICVFTSGFFIIEKRNYTKSSIKDQIKCIYSIIKLSYLKNFIIFIFIMMSTPSCGNTLFFYITNELKFSPNLLGKMAMFQSLASFISIISYMLFFTKIDIRKLLLYSTIIITPFCLLPLVVIKKVNYFLFIPNTLFFITDTVLIEFIAEFQTMPILVLCSRLIPEGFESTIYSLLLSSNNFASIISSFLSSLLTYSLNITSTNFTNLPYMIIICCLTNIIPIFFLYILPNHSQKKNLQHSNSHTQKYYSYPSTDYISSQKSDSSEITKFSADMQIDDITLE.

4 helical membrane passes run 58–78 (SLIAMLQGVEVLCNLSIIYLL), 89–109 (LSIVMCFIKIPWSIKLVWAVI), 122–142 (YYLLLGSFLCILSLICLGLIT), and 146–166 (LFITILLLFIYFFGSSLCNVI). Asn177, Asn181, and Asn186 each carry an N-linked (GlcNAc...) asparagine glycan. The next 2 membrane-spanning stretches (helical) occupy residues 192–212 (AFRKLSFAIMSYLSGYLLLLI) and 216–236 (HIFLIGSFLPICVFTSGFFII). A glycan (N-linked (GlcNAc...) asparagine) is linked at Asn240. 5 helical membrane passes run 266–286 (IIFIFIMMSTPSCGNTLFFYI), 300–320 (MAMFQSLASFISIISYMLFFT), 326–346 (KLLLYSTIIITPFCLLPLVVI), 352–372 (FLFIPNTLFFITDTVLIEFIA), and 405–425 (FASIISSFLSSLLTYSLNITS). A glycan (N-linked (GlcNAc...) asparagine) is linked at Asn427. The chain crosses the membrane as a helical span at residues 431 to 451 (LPYMIIICCLTNIIPIFFLYI). The N-linked (GlcNAc...) asparagine glycan is linked to Asn454.

Belongs to the major facilitator superfamily. Folate-biopterin transporter (TC 2.A.71) family.

The protein resides in the cell membrane. It catalyses the reaction folate(in) + H(+)(in) = folate(out) + H(+)(out). With respect to regulation, transport of folates is inhibited by probenecid and methotrexate. In terms of biological role, folate transporter with broad substrate specificity. Transports folic acid, folinic acid, pteroic acid, dihydropteroic acid, the folate precursor p-amino benzoic acid (pABA) and the human folate catabolite pABA monoglutamate. This Plasmodium falciparum (isolate 3D7) protein is Folate transporter 1.